A 600-amino-acid chain; its full sequence is Alpha pinene synthase, chloroplastic (600 aa).

The disordered stretch occupies residues 1–27 (MSSISMHAGPLNISAANNHHPSWDRRV). The N-terminal 31 residues, 1–31 (MSSISMHAGPLNISAANNHHPSWDRRVSKPR), are a transit peptide targeting the chloroplast. Mg(2+) contacts are provided by D354, D358, D498, and E506. Residues 354–358 (DDVYD) carry the DDXXD motif motif.

It belongs to the terpene synthase family. Tpsa subfamily. It depends on Mg(2+) as a cofactor. Mn(2+) serves as cofactor. Expressed at low levels in leaves.

The protein localises to the plastid. The protein resides in the chloroplast. It carries out the reaction (2E)-geranyl diphosphate = alpha-pinene + diphosphate. Its pathway is secondary metabolite biosynthesis; terpenoid biosynthesis. Functionally, monoterpene synthase involved in the biosynthesis of volatile compounds widely used in aromatherapy and folk medicine, and present in culinary herbs. Mediates the conversion of (2E)-geranyl diphosphate (GPP) into alpha-pinene and, as minor compounds, into alpha-phellandrene, limonene and alpha-terpinolene. The sequence is that of Alpha pinene synthase, chloroplastic from Lavandula viridis (Green lavender).